Reading from the N-terminus, the 316-residue chain is tRNA dimethylallyltransferase (316 aa).

Position 13 to 20 (13 to 20 (GPTAVGKT)) interacts with ATP. 15 to 20 (TAVGKT) is a binding site for substrate. The interval 38-41 (DSIQ) is interaction with substrate tRNA.

It belongs to the IPP transferase family. Monomer. Requires Mg(2+) as cofactor.

It carries out the reaction adenosine(37) in tRNA + dimethylallyl diphosphate = N(6)-dimethylallyladenosine(37) in tRNA + diphosphate. In terms of biological role, catalyzes the transfer of a dimethylallyl group onto the adenine at position 37 in tRNAs that read codons beginning with uridine, leading to the formation of N6-(dimethylallyl)adenosine (i(6)A). This Staphylococcus carnosus (strain TM300) protein is tRNA dimethylallyltransferase.